Consider the following 29-residue polypeptide: Cyclotide mang-A (29 aa).

A cross-link (cyclopeptide (Gly-Asp)) is located at residues 1–29 (GFPTCGETCTLGTCNTPGCTCSWPICTRD). 3 cysteine pairs are disulfide-bonded: C5–C19, C9–C21, and C14–C26.

It belongs to the cyclotide family. Moebius subfamily. Post-translationally, this is a cyclic peptide.

Its function is as follows. Probably participates in a plant defense mechanism. The polypeptide is Cyclotide mang-A (Melicytus angustifolius (Hymenanthera angustifolia)).